We begin with the raw amino-acid sequence, 61 residues long: Small ribosomal subunit protein uS14 (61 aa).

Zn(2+)-binding residues include Cys24, Cys27, Cys40, and Cys43.

This sequence belongs to the universal ribosomal protein uS14 family. Zinc-binding uS14 subfamily. As to quaternary structure, part of the 30S ribosomal subunit. Contacts proteins S3 and S10. Requires Zn(2+) as cofactor.

Functionally, binds 16S rRNA, required for the assembly of 30S particles and may also be responsible for determining the conformation of the 16S rRNA at the A site. The polypeptide is Small ribosomal subunit protein uS14 (Clostridioides difficile (strain 630) (Peptoclostridium difficile)).